The sequence spans 371 residues: Carbamoyl phosphate synthase small chain (371 aa).

The tract at residues 1 to 186 is CPSase; sequence MDYYNNDTPG…IHQGKTGDVV (186 aa). Positions 52, 233, and 235 each coordinate L-glutamine. Residues 185 to 371 form the Glutamine amidotransferase type-1 domain; sequence VVVVVDCGIK…KFKKMVVGDA (187 aa). The active-site Nucleophile is Cys-261. The L-glutamine site is built by Leu-262, Gln-265, Asn-303, Gly-305, and Tyr-306. Catalysis depends on residues His-346 and Glu-348.

Belongs to the CarA family. In terms of assembly, composed of two chains; the small (or glutamine) chain promotes the hydrolysis of glutamine to ammonia, which is used by the large (or ammonia) chain to synthesize carbamoyl phosphate. Tetramer of heterodimers (alpha,beta)4.

It carries out the reaction hydrogencarbonate + L-glutamine + 2 ATP + H2O = carbamoyl phosphate + L-glutamate + 2 ADP + phosphate + 2 H(+). It catalyses the reaction L-glutamine + H2O = L-glutamate + NH4(+). It participates in amino-acid biosynthesis; L-arginine biosynthesis; carbamoyl phosphate from bicarbonate: step 1/1. The protein operates within pyrimidine metabolism; UMP biosynthesis via de novo pathway; (S)-dihydroorotate from bicarbonate: step 1/3. Its function is as follows. Small subunit of the glutamine-dependent carbamoyl phosphate synthetase (CPSase). CPSase catalyzes the formation of carbamoyl phosphate from the ammonia moiety of glutamine, carbonate, and phosphate donated by ATP, constituting the first step of 2 biosynthetic pathways, one leading to arginine and/or urea and the other to pyrimidine nucleotides. The small subunit (glutamine amidotransferase) binds and cleaves glutamine to supply the large subunit with the substrate ammonia. This is Carbamoyl phosphate synthase small chain from Sulfolobus acidocaldarius (strain ATCC 33909 / DSM 639 / JCM 8929 / NBRC 15157 / NCIMB 11770).